A 92-amino-acid chain; its full sequence is Small ribosomal subunit protein uS19 (92 aa).

Belongs to the universal ribosomal protein uS19 family.

Its function is as follows. Protein S19 forms a complex with S13 that binds strongly to the 16S ribosomal RNA. The protein is Small ribosomal subunit protein uS19 of Mycoplasmopsis agalactiae (strain NCTC 10123 / CIP 59.7 / PG2) (Mycoplasma agalactiae).